Here is a 158-residue protein sequence, read N- to C-terminus: Snaclec mucetin subunit alpha (158 aa).

The first 23 residues, 1-23, serve as a signal peptide directing secretion; that stretch reads MGRFTFVSFGLLVVFLSLSGTGA. Intrachain disulfides connect cysteine 27/cysteine 38, cysteine 55/cysteine 152, and cysteine 127/cysteine 144. Residues 34 to 153 form the C-type lectin domain; sequence YDRYCYQAFS…CGRENPFVCK (120 aa).

This sequence belongs to the snaclec family. Dimer and tetramer of heterodimers of alpha and beta subunits ((alphabeta)(2) and (alphabeta)(4)); disulfide-linked. These two multimeric forms are found. The complex is glycosylated. In terms of tissue distribution, expressed by the venom gland.

The protein localises to the secreted. In terms of biological role, potent platelet activator that acts via GPIb (GP1BA/GP1BB). After activation by the toxin, the receptor is redistributed on platelet surface thanks to cytoskeletal translocation. The indirect activation of integrin alpha-IIb/beta-3 (ITGA2B/ITGB3) also induced by the toxin is downstream the cytoskeletal translocation of GPIb. This chain is Snaclec mucetin subunit alpha, found in Protobothrops mucrosquamatus (Taiwan habu).